Reading from the N-terminus, the 473-residue chain is Cysteine--tRNA ligase (473 aa).

C28 lines the Zn(2+) pocket. Residues M30–H40 carry the 'HIGH' region motif. Residues C209, H234, and E238 each coordinate Zn(2+). The short motif at K282–S286 is the 'KMSKS' region element. An ATP-binding site is contributed by K285.

The protein belongs to the class-I aminoacyl-tRNA synthetase family. As to quaternary structure, monomer. Zn(2+) is required as a cofactor.

Its subcellular location is the cytoplasm. It carries out the reaction tRNA(Cys) + L-cysteine + ATP = L-cysteinyl-tRNA(Cys) + AMP + diphosphate. In Neisseria meningitidis serogroup B (strain ATCC BAA-335 / MC58), this protein is Cysteine--tRNA ligase.